A 123-amino-acid chain; its full sequence is Small ribosomal subunit protein uS12c (123 aa).

Belongs to the universal ribosomal protein uS12 family. As to quaternary structure, part of the 30S ribosomal subunit.

Its subcellular location is the plastid. It is found in the chloroplast. Its function is as follows. With S4 and S5 plays an important role in translational accuracy. Located at the interface of the 30S and 50S subunits. In Oenothera elata subsp. hookeri (Hooker's evening primrose), this protein is Small ribosomal subunit protein uS12c (rps12).